The sequence spans 322 residues: Tetraacyldisaccharide 4'-kinase (322 aa).

ATP is bound at residue 54-61 (SVGGTGKT).

It belongs to the LpxK family.

The enzyme catalyses a lipid A disaccharide + ATP = a lipid IVA + ADP + H(+). The protein operates within glycolipid biosynthesis; lipid IV(A) biosynthesis; lipid IV(A) from (3R)-3-hydroxytetradecanoyl-[acyl-carrier-protein] and UDP-N-acetyl-alpha-D-glucosamine: step 6/6. Transfers the gamma-phosphate of ATP to the 4'-position of a tetraacyldisaccharide 1-phosphate intermediate (termed DS-1-P) to form tetraacyldisaccharide 1,4'-bis-phosphate (lipid IVA). This is Tetraacyldisaccharide 4'-kinase from Francisella philomiragia subsp. philomiragia (strain ATCC 25017 / CCUG 19701 / FSC 153 / O#319-036).